The following is a 154-amino-acid chain: Iron-sulfur cluster assembly 2 homolog, mitochondrial (154 aa).

Residues 1–8 (MAAARGLS) constitute a mitochondrion transit peptide. 3 residues coordinate Fe cation: Cys79, Cys144, and Cys146.

It belongs to the HesB/IscA family. In terms of assembly, heterotetramer; forms a dimer of dimers with IBA57. Interacts with [2Fe-2S]-ISCA2 forming the heterodimer [2Fe- 2S]-ISCA2-IBA57 complex; [2Fe-2S] cluster binding is absolutely required to promote the complex formation.

The protein resides in the mitochondrion. In terms of biological role, involved in the maturation of mitochondrial 4Fe-4S proteins functioning late in the iron-sulfur cluster assembly pathway. May be involved in the binding of an intermediate of Fe/S cluster assembly. This Pongo abelii (Sumatran orangutan) protein is Iron-sulfur cluster assembly 2 homolog, mitochondrial (ISCA2).